A 31-amino-acid polypeptide reads, in one-letter code: ECGTLFSGCSTHADCCEGFICKLWCRYERTW.

Cystine bridges form between Cys-2-Cys-16, Cys-9-Cys-21, and Cys-15-Cys-25. The residue at position 31 (Trp-31) is a Tryptophan amide.

As to expression, expressed by the venom gland.

It is found in the secreted. Its function is as follows. Blocks transient outward voltage-gated potassium channels in rat ventricular myocytes (thus prolonging action-potential duration) and rat Kv4.2/KCNA4 channels expressed in Xenopus oocytes. Is also a weak blocker of calcium channels in rat cerebellar granule cells. This is Kappa-sparatoxin-Hv1c from Heteropoda venatoria (Brown huntsman spider).